The following is a 360-amino-acid chain: G-protein coupled receptor 15 (360 aa).

Residues methionine 1 to serine 33 are Extracellular-facing. A helical membrane pass occupies residues valine 34–leucine 54. Residues methionine 55–aspartate 69 are Cytoplasmic-facing. Residues isoleucine 70–valine 90 form a helical membrane-spanning segment. Topologically, residues aspartate 91 to serine 120 are extracellular. Residues valine 121–serine 141 form a helical membrane-spanning segment. The Cytoplasmic portion of the chain corresponds to arginine 142–cysteine 149. The chain crosses the membrane as a helical span at residues alanine 150–leucine 170. The Extracellular segment spans residues serine 171–lysine 192. The helical transmembrane segment at leucine 193–threonine 213 threads the bilayer. Topologically, residues cysteine 214–serine 239 are cytoplasmic. The chain crosses the membrane as a helical span at residues isoleucine 240 to serine 260. The Extracellular segment spans residues lysine 261–methionine 284. The helical transmembrane segment at glutamate 285–phenylalanine 305 threads the bilayer. Topologically, residues aspartate 306–leucine 360 are cytoplasmic. At serine 359 the chain carries Phosphoserine.

Belongs to the G-protein coupled receptor 1 family. Interacts with adapter YWHAE; this interaction promotes ER-to-Golgi transport of GPR15. Phosphorylation is necessary for YWHAE binding and efficient surface expression. In terms of processing, O-glycosylated. Sialylated O-glycans in the N-terminal tail inhibits binding of GPR15LG. Post-translationally, sulfation is required for efficient binding of GPR15LG.

The protein localises to the cell membrane. In terms of biological role, g protein-coupled receptor that plays an important role in immune homeostasis. Acts via its natural ligand GPR15LG, a chemokine-like polypeptide strongly expressed in gastrointestinal tissues. GPR15-GPR15LG signaling axis regulates intestinal homeostasis and inflammation through the migration of immune cells. Controls thereby the specific homing of T-cells, particularly FOXP3+ regulatory T-cells (Tregs), to the large intestine lamina propria. Also required for skin localization of thymus-derived dendritic epidermal T-cells. Plays an important role in mediating cytoprotective function as well as angiogenesis of thrombomodulin. Mechanistically, preferentially signals through the Gi/o pathway to inhibit adenylate cyclase activity and activate a phosphatidylinositol-calcium second messenger system that regulates the release of Ca(2+) ions from intracellular stores. In Macaca nemestrina (Pig-tailed macaque), this protein is G-protein coupled receptor 15 (GPR15).